The sequence spans 151 residues: Cell division protein SepF (151 aa).

The span at Asp-17 to Gln-29 shows a compositional bias: acidic residues. The disordered stretch occupies residues Asp-17–His-42.

The protein belongs to the SepF family. As to quaternary structure, homodimer. Interacts with FtsZ.

The protein resides in the cytoplasm. Its function is as follows. Cell division protein that is part of the divisome complex and is recruited early to the Z-ring. Probably stimulates Z-ring formation, perhaps through the cross-linking of FtsZ protofilaments. Its function overlaps with FtsA. The polypeptide is Cell division protein SepF (Lacticaseibacillus casei (strain BL23) (Lactobacillus casei)).